Reading from the N-terminus, the 580-residue chain is Adenine deaminase (580 aa).

Belongs to the metallo-dependent hydrolases superfamily. Adenine deaminase family. It depends on Mn(2+) as a cofactor.

It carries out the reaction adenine + H2O + H(+) = hypoxanthine + NH4(+). The protein is Adenine deaminase of Listeria monocytogenes serovar 1/2a (strain ATCC BAA-679 / EGD-e).